Consider the following 156-residue polypeptide: MPRKKSINKRDVLPDVFYNSKLVTKTINTIMKDGKKATAQAILYGAFNKVKEITQREPIIVFDEALKNIMPELEVRSRRIGGQKYQIPSEVRPERKQSLGLRWLVQFAQKRNEKTMQQKLAKEIIDAASGNGLAVKKREEIHRMAEANKSFAHYRW.

It belongs to the universal ribosomal protein uS7 family. Part of the 30S ribosomal subunit. Contacts proteins S9 and S11.

Functionally, one of the primary rRNA binding proteins, it binds directly to 16S rRNA where it nucleates assembly of the head domain of the 30S subunit. Is located at the subunit interface close to the decoding center, probably blocks exit of the E-site tRNA. This is Small ribosomal subunit protein uS7 from Phytoplasma mali (strain AT).